The chain runs to 2399 residues: Norsolorinic acid synthase (2399 aa).

The segment at 10–247 (LVFGDQTYDF…RQIPIYVPAH (238 aa)) is starter unit:ACP transacylase (SAT) domain. Residues 372–805 (KSKLAIVSMS…GGNTALLIED (434 aa)) enclose the Ketosynthase family 3 (KS3) domain. Active-site for beta-ketoacyl synthase activity residues include cysteine 544, histidine 679, and histidine 722. A malonyl-CoA:ACP transacylase (MAT) domain region spans residues 905–1192 (FAFTGQGSQY…LCGMIKNILG (288 aa)). Catalysis depends on serine 995, which acts as the For acyl/malonyl transferase activity. Residues 1307 to 1327 (VQEAPAAKTETKKMSKLDPTK) form a disordered region. A compositionally biased stretch (basic and acidic residues) spans 1315-1327 (TETKKMSKLDPTK). The N-terminal hotdog fold stretch occupies residues 1340 to 1483 (HKVIEEKTEP…CTVRFTTDSQ (144 aa)). Residues 1340–1658 (HKVIEEKTEP…LRSVPRKALR (319 aa)) form the PKS/mFAS DH domain. The tract at residues 1353 to 1658 (QFTVETDISR…LRSVPRKALR (306 aa)) is product template (PT) domain. Histidine 1372 acts as the Proton acceptor; for dehydratase activity in catalysis. The segment at 1510–1658 (LTHYNTKSGY…LRSVPRKALR (149 aa)) is C-terminal hotdog fold. Aspartate 1570 functions as the Proton donor; for dehydratase activity in the catalytic mechanism. Residues 1665-1734 (MDKGIRQRGG…AALKASVPKA (70 aa)) form a disordered region. Residues 1677 to 1698 (GAAKGAVAAPAPAKKMVEPVKA) are compositionally biased toward low complexity. Positions 1708–1723 (AAPPSPSKAAPPPAPK) are enriched in pro residues. The span at 1724–1734 (PAALKASVPKA) shows a compositional bias: low complexity. 3 Carrier domains span residues 1733 to 1812 (KADP…AGAA), 1877 to 1953 (SKVF…GGSG), and 2020 to 2099 (VART…TGSS). Serine 1770, serine 1911, and serine 2057 each carry O-(pantetheine 4'-phosphoryl)serine. The span at 2098-2115 (SSADSDSSSVASNPADPA) shows a compositional bias: low complexity. Residues 2098-2149 (SSADSDSSSVASNPADPAATPPRSESSDTEPDDEAPSKPKSGPGSTDSCRST) are disordered. Residues 2140 to 2149 (PGSTDSCRST) show a composition bias toward polar residues. The thioesterase/Claisen cyclase (TE/CLC) domain stretch occupies residues 2164 to 2393 (TLFLLPDGGG…KARVNYVSDL (230 aa)). Residue serine 2234 is the For thioesterase activity of the active site.

Pantetheine 4'-phosphate serves as cofactor.

The enzyme catalyses hexanoyl-[ACP] + 7 malonyl-CoA + 6 H(+) = noranthrone + holo-[ACP] + 7 CO2 + 7 CoA + 2 H2O. Its pathway is mycotoxin biosynthesis. Polyketide synthase; part of the fragmented gene cluster that mediates the biosynthesis of dothistromin (DOTH), a polyketide toxin very similar in structure to the aflatoxin precursor, versicolorin B. The first step of the pathway is the conversion of acetate to norsolorinic acid (NOR) and requires the fatty acid synthase subunits hexA and hexB, as well as the polyketide synthase pksA. PksA combines a hexanoyl starter unit and 7 malonyl-CoA extender units to synthesize the precursor NOR. The hexanoyl starter unit is provided to the acyl-carrier protein (ACP) domain by the fungal fatty acid synthase hexA/hexB. The second step is the conversion of NOR to averantin (AVN) and requires the norsolorinic acid ketoreductase nor1, which catalyzes the dehydration of norsolorinic acid to form (1'S)-averantin. The cytochrome P450 monooxygenase avnA then catalyzes the hydroxylation of AVN to 5'hydroxyaverantin (HAVN). The next step is performed by adhA that transforms HAVN to averufin (AVF). Averufin might then be converted to hydroxyversicolorone by cypX and avfA. Hydroxyversicolorone is further converted versiconal hemiacetal acetate (VHA) by moxY. VHA is then the substrate for the versiconal hemiacetal acetate esterase est1 to yield versiconal (VAL). Versicolorin B synthase vbsA then converts VAL to versicolorin B (VERB) by closing the bisfuran ring. Then, the activity of the versicolorin B desaturase verB leads to versicolorin A (VERA). DotB, a predicted chloroperoxidase, may perform epoxidation of the A-ring of VERA. Alternatively, a cytochrome P450, such as cypX or avnA could catalyze this step. It is also possible that another, uncharacterized, cytochrome P450 enzyme is responsible for this step. Opening of the epoxide could potentially be achieved by the epoxide hydrolase epoA. However, epoA seems not to be required for DOTH biosynthesis, but other epoxide hydrolases may have the ability to complement this hydrolysis. Alternatively, opening of the epoxide ring could be achieved non-enzymatically. The next step is the deoxygenation of ring A to yield the 5,8-dihydroxyanthraquinone which is most likely catalyzed by the NADPH dehydrogenase encoded by ver1. The last stages of DOTH biosynthesis are proposed to involve hydroxylation of the bisfuran. OrdB and norB might have oxidative roles here. An alternative possibility is that cytochrome P450 monoogenases such as avnA and cypX might perform these steps in addition to previously proposed steps. In Dothistroma septosporum (Red band needle blight fungus), this protein is Norsolorinic acid synthase.